The primary structure comprises 396 residues: Bifunctional enzyme Fae/Hps (396 aa).

The formaldehyde-activating enzyme stretch occupies residues 1–161 (MMLIGEALIG…HEKDRAAHAV (161 aa)). The Proton donor role is filled by histidine 17. Substrate contacts are provided by aspartate 19, leucine 48, lysine 66, threonine 68, and glutamine 83. Residues 162 to 396 (MGFKISKLWD…IDQFRIMTDF (235 aa)) form a 3-hexulose-6-phosphate synthase region.

It in the N-terminal section; belongs to the formaldehyde-activating enzyme family. In the C-terminal section; belongs to the HPS/KGPDC family. HPS subfamily.

The catalysed reaction is 5,6,7,8-tetrahydromethanopterin + formaldehyde = 5,10-methylenetetrahydromethanopterin + H2O. It catalyses the reaction D-ribulose 5-phosphate + formaldehyde = D-arabino-hex-3-ulose 6-phosphate. The protein operates within carbohydrate biosynthesis; D-ribose 5-phosphate biosynthesis. Catalyzes the condensation of formaldehyde with tetrahydromethanopterin (H(4)MPT) to 5,10-methylenetetrahydromethanopterin. Functionally, catalyzes the reversible formation of ribulose-5-phosphate and formaldehyde from 3-hexulose-6-phosphate. This Methanococcoides burtonii (strain DSM 6242 / NBRC 107633 / OCM 468 / ACE-M) protein is Bifunctional enzyme Fae/Hps.